The following is a 92-amino-acid chain: Small ribosomal subunit protein uS17 (92 aa).

This sequence belongs to the universal ribosomal protein uS17 family. As to quaternary structure, part of the 30S ribosomal subunit.

In terms of biological role, one of the primary rRNA binding proteins, it binds specifically to the 5'-end of 16S ribosomal RNA. The protein is Small ribosomal subunit protein uS17 of Cupriavidus necator (strain ATCC 17699 / DSM 428 / KCTC 22496 / NCIMB 10442 / H16 / Stanier 337) (Ralstonia eutropha).